A 172-amino-acid chain; its full sequence is Nicotinamide-nucleotide adenylyltransferase (172 aa).

The protein belongs to the archaeal NMN adenylyltransferase family.

Its subcellular location is the cytoplasm. It catalyses the reaction beta-nicotinamide D-ribonucleotide + ATP + H(+) = diphosphate + NAD(+). It participates in cofactor biosynthesis; NAD(+) biosynthesis; NAD(+) from nicotinamide D-ribonucleotide: step 1/1. The chain is Nicotinamide-nucleotide adenylyltransferase from Sulfurisphaera tokodaii (strain DSM 16993 / JCM 10545 / NBRC 100140 / 7) (Sulfolobus tokodaii).